A 468-amino-acid chain; its full sequence is Ribulose bisphosphate carboxylase large chain (468 aa).

Lys-5 is subject to N6,N6,N6-trimethyllysine. Positions 114 and 164 each coordinate substrate. Lys-166 functions as the Proton acceptor in the catalytic mechanism. Residue Lys-168 participates in substrate binding. Mg(2+)-binding residues include Lys-192, Asp-194, and Glu-195. Lys-192 bears the N6-carboxylysine mark. His-285 (proton acceptor) is an active-site residue. Residues Arg-286, His-318, and Ser-370 each contribute to the substrate site.

This sequence belongs to the RuBisCO large chain family. Type I subfamily. Heterohexadecamer of 8 large chains and 8 small chains; disulfide-linked. The disulfide link is formed within the large subunit homodimers. It depends on Mg(2+) as a cofactor. In terms of processing, the disulfide bond which can form in the large chain dimeric partners within the hexadecamer appears to be associated with oxidative stress and protein turnover.

It is found in the plastid. The protein localises to the chloroplast. The catalysed reaction is 2 (2R)-3-phosphoglycerate + 2 H(+) = D-ribulose 1,5-bisphosphate + CO2 + H2O. It carries out the reaction D-ribulose 1,5-bisphosphate + O2 = 2-phosphoglycolate + (2R)-3-phosphoglycerate + 2 H(+). RuBisCO catalyzes two reactions: the carboxylation of D-ribulose 1,5-bisphosphate, the primary event in carbon dioxide fixation, as well as the oxidative fragmentation of the pentose substrate in the photorespiration process. Both reactions occur simultaneously and in competition at the same active site. This is Ribulose bisphosphate carboxylase large chain from Salvia divinorum (Maria pastora).